We begin with the raw amino-acid sequence, 20 residues long: Dermaseptin-N1 (20 aa).

Residue L20 is modified to Leucine amide.

As to expression, expressed by the skin glands.

It localises to the secreted. Its function is as follows. Antimicrobial peptide with moderate activity against both Gram-positive and Gram-negative bacteria, and important activity against Leishmania species (L.amazonensis and L.infantum). Acts on both Leishmania promastigote and amastigote forms. Shows activity against E.coli (MIC=17.8 uM), S.aureus (MIC=32.3 uM) and the phytopathogenic bacterium Xanthomonas axonopodis (MIC=2 uM). Shows low cytotoxicity against mammalian cells in models of peritoneal macrophages. The protein is Dermaseptin-N1 of Pithecopus nordestinus (Northeastern Brazilian leaf frog).